Reading from the N-terminus, the 528-residue chain is Membrane protein insertase YidC (528 aa).

4 helical membrane-spanning segments follow: residues 5–25, 346–366, 416–436, and 486–506; these read VVIAVILSIAVLYAYSMIFPP, YGIAIIIITVILKLLFFPLTH, LPMIVQIPVFFALYKALMFSI, and MLALPVVFTFMFLNFPSGLVL.

It belongs to the OXA1/ALB3/YidC family. Type 1 subfamily. In terms of assembly, interacts with the Sec translocase complex via SecD. Specifically interacts with transmembrane segments of nascent integral membrane proteins during membrane integration.

The protein resides in the cell inner membrane. Its function is as follows. Required for the insertion and/or proper folding and/or complex formation of integral membrane proteins into the membrane. Involved in integration of membrane proteins that insert both dependently and independently of the Sec translocase complex, as well as at least some lipoproteins. Aids folding of multispanning membrane proteins. This is Membrane protein insertase YidC from Geotalea uraniireducens (strain Rf4) (Geobacter uraniireducens).